Here is a 126-residue protein sequence, read N- to C-terminus: Hydrogenase maturation factor HypA (126 aa).

Ni(2+) is bound at residue His2. Zn(2+)-binding residues include Cys78, Cys81, Cys97, and Cys100.

This sequence belongs to the HypA/HybF family.

In terms of biological role, involved in the maturation of [NiFe] hydrogenases. Required for nickel insertion into the metal center of the hydrogenase. This is Hydrogenase maturation factor HypA from Methanococcus maripaludis (strain DSM 14266 / JCM 13030 / NBRC 101832 / S2 / LL).